Consider the following 198-residue polypeptide: N-acetyltransferase 9-like protein (198 aa).

An N-acetyltransferase domain is found at 34 to 178 (EEIRRLTGSE…KEITMELPGE (145 aa)).

The protein belongs to the acetyltransferase family. GNAT subfamily.

This is N-acetyltransferase 9-like protein from Caenorhabditis briggsae.